A 307-amino-acid polypeptide reads, in one-letter code: Probable deoxyhypusine synthase (307 aa).

Catalysis depends on K278, which acts as the Nucleophile.

The protein belongs to the deoxyhypusine synthase family. The cofactor is NAD(+).

It catalyses the reaction [eIF5A protein]-L-lysine + spermidine = [eIF5A protein]-deoxyhypusine + propane-1,3-diamine. Its pathway is protein modification; eIF5A hypusination. Catalyzes the NAD-dependent oxidative cleavage of spermidine and the subsequent transfer of the butylamine moiety of spermidine to the epsilon-amino group of a specific lysine residue of the eIF-5A precursor protein to form the intermediate deoxyhypusine residue. In Methanothermobacter thermautotrophicus (strain ATCC 29096 / DSM 1053 / JCM 10044 / NBRC 100330 / Delta H) (Methanobacterium thermoautotrophicum), this protein is Probable deoxyhypusine synthase (dys).